A 270-amino-acid polypeptide reads, in one-letter code: MKKLLISFIAILFFICGFNLKAFAAEEIIDYQSLYNQAIQEGVLDQNSVSYNEWLKQNKEEFMPIYQDGLKQGVFLEPLSYNEWLKLNNYGQAPTGDIELFDDVTPRGSWGGFTLKAGDIFITNATSSAGIVGHAAIANGDNYILHMPGAGQGNQQLSTSNWMQKYTASGKWIKVYRLKDQTLARDVARYADRNFYSTTGSATKNVYLDYGIDTHLYQKNPTYCSKLVFQALYFGSGSRNVMQAVSGIVTPYGLIDTFTSAYRPSLVKTY.

Possibly involved in pGI2 replication mechanism. This is an uncharacterized protein from Bacillus thuringiensis.